The following is a 223-amino-acid chain: Triosephosphate isomerase (223 aa).

6–8 (NLK) is a binding site for substrate. Residue His-86 is the Electrophile of the active site. The active-site Proton acceptor is Glu-151. Residues Gly-157 and Ser-187 each contribute to the substrate site.

It belongs to the triosephosphate isomerase family. As to quaternary structure, homodimer.

It is found in the cytoplasm. It catalyses the reaction D-glyceraldehyde 3-phosphate = dihydroxyacetone phosphate. The protein operates within carbohydrate biosynthesis; gluconeogenesis. It participates in carbohydrate degradation; glycolysis; D-glyceraldehyde 3-phosphate from glycerone phosphate: step 1/1. Its function is as follows. Involved in the gluconeogenesis. Catalyzes stereospecifically the conversion of dihydroxyacetone phosphate (DHAP) to D-glyceraldehyde-3-phosphate (G3P). The sequence is that of Triosephosphate isomerase from Campylobacter jejuni subsp. jejuni serotype O:2 (strain ATCC 700819 / NCTC 11168).